The sequence spans 236 residues: UPF0502 protein BamMC406_5439 (236 aa).

Belongs to the UPF0502 family.

This is UPF0502 protein BamMC406_5439 from Burkholderia ambifaria (strain MC40-6).